A 268-amino-acid polypeptide reads, in one-letter code: Phosphatidylglycerol--prolipoprotein diacylglyceryl transferase (268 aa).

The next 7 membrane-spanning stretches (helical) occupy residues Ile23–Ala43, Leu62–Tyr82, Val97–Trp117, Phe132–Leu152, Ser179–Ile199, Ala206–Val226, and Gly241–Ser261. Arg145 contacts a 1,2-diacyl-sn-glycero-3-phospho-(1'-sn-glycerol).

It belongs to the Lgt family.

It localises to the cell inner membrane. The catalysed reaction is L-cysteinyl-[prolipoprotein] + a 1,2-diacyl-sn-glycero-3-phospho-(1'-sn-glycerol) = an S-1,2-diacyl-sn-glyceryl-L-cysteinyl-[prolipoprotein] + sn-glycerol 1-phosphate + H(+). Its pathway is protein modification; lipoprotein biosynthesis (diacylglyceryl transfer). Functionally, catalyzes the transfer of the diacylglyceryl group from phosphatidylglycerol to the sulfhydryl group of the N-terminal cysteine of a prolipoprotein, the first step in the formation of mature lipoproteins. In Haemophilus influenzae (strain 86-028NP), this protein is Phosphatidylglycerol--prolipoprotein diacylglyceryl transferase.